Reading from the N-terminus, the 251-residue chain is tRNA (guanine-N(7)-)-methyltransferase (251 aa).

S-adenosyl-L-methionine-binding positions include Gly72, 95–96, 132–133, and Leu152; these read EI and NA. Residue Asp155 is part of the active site. An S-adenosyl-L-methionine-binding site is contributed by 230 to 232; the sequence is SEE.

Belongs to the class I-like SAM-binding methyltransferase superfamily. TrmB family.

It is found in the nucleus. It carries out the reaction guanosine(46) in tRNA + S-adenosyl-L-methionine = N(7)-methylguanosine(46) in tRNA + S-adenosyl-L-homocysteine. The protein operates within tRNA modification; N(7)-methylguanine-tRNA biosynthesis. Catalyzes the formation of N(7)-methylguanine at position 46 (m7G46) in tRNA. The chain is tRNA (guanine-N(7)-)-methyltransferase from Drosophila willistoni (Fruit fly).